Consider the following 426-residue polypeptide: Phosphoribosylamine--glycine ligase (426 aa).

The region spanning 113–320 (KSLMTEAKIP…LLELLYRAST (208 aa)) is the ATP-grasp domain. 139 to 200 (LESKSIPIVI…EEFMEGQEAS (62 aa)) is a binding site for ATP. The Mg(2+) site is built by Glu290 and Asn292.

It belongs to the GARS family. Mg(2+) is required as a cofactor. Requires Mn(2+) as cofactor.

The enzyme catalyses 5-phospho-beta-D-ribosylamine + glycine + ATP = N(1)-(5-phospho-beta-D-ribosyl)glycinamide + ADP + phosphate + H(+). It participates in purine metabolism; IMP biosynthesis via de novo pathway; N(1)-(5-phospho-D-ribosyl)glycinamide from 5-phospho-alpha-D-ribose 1-diphosphate: step 2/2. In Leptospira interrogans serogroup Icterohaemorrhagiae serovar Lai (strain 56601), this protein is Phosphoribosylamine--glycine ligase.